The sequence spans 380 residues: uncharacterized protein (380 aa).

Residues 111-369 enclose the Peptidase M14 domain; it reads APYSMERHHD…DCLAILAEMI (259 aa). Histidine 164, glutamate 167, and histidine 257 together coordinate Zn(2+). Glutamate 333 functions as the Proton donor/acceptor in the catalytic mechanism.

The cofactor is Zn(2+).

This is an uncharacterized protein from Zymomonas mobilis subsp. mobilis (strain ATCC 31821 / ZM4 / CP4).